A 246-amino-acid chain; its full sequence is Exosome complex component Rrp41 (246 aa).

It belongs to the RNase PH family. Rrp41 subfamily. As to quaternary structure, component of the archaeal exosome complex. Forms a hexameric ring-like arrangement composed of 3 Rrp41-Rrp42 heterodimers. The hexameric ring associates with a trimer of Rrp4 and/or Csl4 subunits.

It is found in the cytoplasm. Catalytic component of the exosome, which is a complex involved in RNA degradation. Has 3'-&gt;5' exoribonuclease activity. Can also synthesize heteromeric RNA-tails. The protein is Exosome complex component Rrp41 of Pyrobaculum aerophilum (strain ATCC 51768 / DSM 7523 / JCM 9630 / CIP 104966 / NBRC 100827 / IM2).